The chain runs to 288 residues: Polyamine aminopropyltransferase (288 aa).

The PABS domain occupies 9–238 (ETLHDQFGQY…GIMTFAWATD (230 aa)). Gln-33 serves as a coordination point for S-methyl-5'-thioadenosine. Residues His-64 and Asp-88 each contribute to the spermidine site. S-methyl-5'-thioadenosine-binding positions include Glu-108 and 140-141 (DG). Asp-158 functions as the Proton acceptor in the catalytic mechanism. 158–161 (DCTD) lines the spermidine pocket. Position 165 (Pro-165) interacts with S-methyl-5'-thioadenosine.

Belongs to the spermidine/spermine synthase family. Homodimer or homotetramer.

It localises to the cytoplasm. The enzyme catalyses S-adenosyl 3-(methylsulfanyl)propylamine + putrescine = S-methyl-5'-thioadenosine + spermidine + H(+). The protein operates within amine and polyamine biosynthesis; spermidine biosynthesis; spermidine from putrescine: step 1/1. Catalyzes the irreversible transfer of a propylamine group from the amino donor S-adenosylmethioninamine (decarboxy-AdoMet) to putrescine (1,4-diaminobutane) to yield spermidine. This Shigella sonnei (strain Ss046) protein is Polyamine aminopropyltransferase.